The following is a 193-amino-acid chain: Ion-translocating oxidoreductase complex subunit A (193 aa).

The next 6 helical transmembrane spans lie at 4-24 (FFFI…KFLG), 39-59 (IGMG…SWMV), 71-91 (FLRI…IEVV), 102-122 (ALGI…VALL), 134-154 (LLYG…FAGM), and 167-187 (FAGA…FMGF).

The protein belongs to the NqrDE/RnfAE family. The complex is composed of six subunits: RnfA, RnfB, RnfC, RnfD, RnfE and RnfG.

It localises to the cellular chromatophore membrane. Its function is as follows. Part of a membrane-bound complex that couples electron transfer with translocation of ions across the membrane. This chain is Ion-translocating oxidoreductase complex subunit A, found in Cereibacter sphaeroides (strain ATCC 17029 / ATH 2.4.9) (Rhodobacter sphaeroides).